The sequence spans 118 residues: MSAPAQPPTEGAEGAAPGGGPPGPPPNMTSNRRLQQTQAQVEEVVDIMRVNVDKVLERDQKLSELDDRADALQAGASQFESSAAKLKRKYWWKNCKMMIMLGAICAIIVVVIVIYFFA.

Positions 1 to 15 are enriched in low complexity; that stretch reads MSAPAQPPTEGAEGA. Residues 1 to 36 are disordered; sequence MSAPAQPPTEGAEGAAPGGGPPGPPPNMTSNRRLQQ. Over 1 to 96 the chain is Cytoplasmic; that stretch reads MSAPAQPPTE…KRKYWWKNCK (96 aa). Positions 33–93 constitute a v-SNARE coiled-coil homology domain; sequence RLQQTQAQVE…AKLKRKYWWK (61 aa). The residue at position 63 (serine 63) is a Phosphoserine. A helical; Anchor for type IV membrane protein membrane pass occupies residues 97–116; that stretch reads MMIMLGAICAIIVVVIVIYF. Residues 117 to 118 are Vesicular-facing; it reads FA.

This sequence belongs to the synaptobrevin family. Interacts with VAPA and VAPB.

It localises to the cytoplasmic vesicle. It is found in the secretory vesicle. The protein localises to the synaptic vesicle membrane. Its subcellular location is the synapse. The protein resides in the synaptosome. It localises to the cytoplasmic vesicle membrane. In terms of biological role, involved in the targeting and/or fusion of transport vesicles to their target membrane. This is Vesicle-associated membrane protein 1 (VAMP1) from Bos taurus (Bovine).